A 238-amino-acid chain; its full sequence is CD63 antigen (238 aa).

Topologically, residues 2-11 (AVEGGMKCVK) are cytoplasmic. The chain crosses the membrane as a helical span at residues 12–32 (FLLYVLLLAFCACAVGLIAVG). The Extracellular portion of the chain corresponds to 33–51 (VGAQLVLSQTIIQGATPGS). The helical transmembrane segment at 52–72 (LLPVVIIAVGVFLFLVAFVGC) threads the bilayer. The Cytoplasmic portion of the chain corresponds to 73 to 81 (CGACKENYC). Residues 82–102 (LMITFAIFLSLIMLVEVAAAI) form a helical membrane-spanning segment. At 103-203 (AGYVFRDKVM…KIGGWLRKNV (101 aa)) the chain is on the extracellular side. 3 N-linked (GlcNAc...) asparagine glycosylation sites follow: Asn-130, Asn-150, and Asn-172. A helical transmembrane segment spans residues 204–224 (LVVAAAALGIAFVEVLGIVFA). Residues 225-238 (CCLVKSIRSGYEVM) are Cytoplasmic-facing. Positions 234–238 (GYEVM) match the Lysosomal targeting motif motif.

It belongs to the tetraspanin (TM4SF) family. As to quaternary structure, interacts with TIMP1 and ITGB1 and recruits TIMP1 to ITGB1. Interacts with CD9. Identified in a complex with CD9 and ITGB3. Interacts with PMEL. Interacts with KDR/VEGFR2; identified in a complex with ITGB1 and KDR/VEGFR2 and is required to recruit KDR to ITGB1 complexes. Interacts with SYT7. Palmitoylated at a low, basal level in unstimulated platelets. The level of palmitoylation increases when platelets are activated by thrombin (in vitro). As to expression, detected in platelets (at protein level). Dysplastic nevi, radial growth phase primary melanomas, hematopoietic cells, tissue macrophages.

The protein localises to the cell membrane. It localises to the lysosome membrane. It is found in the late endosome membrane. Its subcellular location is the endosome. The protein resides in the multivesicular body. The protein localises to the melanosome. It localises to the secreted. It is found in the extracellular exosome. Its subcellular location is the cell surface. In terms of biological role, functions as a cell surface receptor for TIMP1 and plays a role in the activation of cellular signaling cascades. Plays a role in the activation of ITGB1 and integrin signaling, leading to the activation of AKT, FAK/PTK2 and MAP kinases. Promotes cell survival, reorganization of the actin cytoskeleton, cell adhesion, spreading and migration, via its role in the activation of AKT and FAK/PTK2. Plays a role in VEGFA signaling via its role in regulating the internalization of KDR/VEGFR2. Plays a role in intracellular vesicular transport processes, and is required for normal trafficking of the PMEL luminal domain that is essential for the development and maturation of melanocytes. Plays a role in the adhesion of leukocytes onto endothelial cells via its role in the regulation of SELP trafficking. May play a role in mast cell degranulation in response to Ms4a2/FceRI stimulation, but not in mast cell degranulation in response to other stimuli. The sequence is that of CD63 antigen (CD63) from Homo sapiens (Human).